We begin with the raw amino-acid sequence, 245 residues long: tRNA (guanine-N(1)-)-methyltransferase (245 aa).

S-adenosyl-L-methionine contacts are provided by residues G113 and 133–138; that span reads IGDYVL.

The protein belongs to the RNA methyltransferase TrmD family. In terms of assembly, homodimer.

It localises to the cytoplasm. The enzyme catalyses guanosine(37) in tRNA + S-adenosyl-L-methionine = N(1)-methylguanosine(37) in tRNA + S-adenosyl-L-homocysteine + H(+). Specifically methylates guanosine-37 in various tRNAs. This is tRNA (guanine-N(1)-)-methyltransferase from Actinobacillus succinogenes (strain ATCC 55618 / DSM 22257 / CCUG 43843 / 130Z).